We begin with the raw amino-acid sequence, 885 residues long: Translation initiation factor IF-2 (885 aa).

A disordered region spans residues 1–295 (MTDNKDDKTI…EKFKRSQMQE (295 aa)). Positions 63–77 (PVAAAPAAARPAEQR) are enriched in low complexity. Pro residues predominate over residues 78 to 94 (PMPPQPSGRPAPQPQPH). Over residues 130–183 (RDAEEAKRRAEEEVRRRREEEERIAREKEEAARRAAEEAARPAVEAEKVEEKVE) the composition is skewed to basic and acidic residues. Positions 184–201 (AATPAVAETRPLSERPAP) are enriched in low complexity. One can recognise a tr-type G domain in the interval 383-550 (ARPPIVTIMG…AILLQSEILD (168 aa)). Positions 392 to 399 (GHVDHGKT) are G1. 392-399 (GHVDHGKT) contributes to the GTP binding site. The segment at 417–421 (GITQH) is G2. The interval 438-441 (DTPG) is G3. GTP-binding positions include 438 to 442 (DTPGH) and 492 to 495 (NKID). The tract at residues 492–495 (NKID) is G4. Residues 528–530 (SAK) form a G5 region.

This sequence belongs to the TRAFAC class translation factor GTPase superfamily. Classic translation factor GTPase family. IF-2 subfamily.

It localises to the cytoplasm. In terms of biological role, one of the essential components for the initiation of protein synthesis. Protects formylmethionyl-tRNA from spontaneous hydrolysis and promotes its binding to the 30S ribosomal subunits. Also involved in the hydrolysis of GTP during the formation of the 70S ribosomal complex. The polypeptide is Translation initiation factor IF-2 (Sinorhizobium medicae (strain WSM419) (Ensifer medicae)).